The primary structure comprises 315 residues: Ribosomal protein L11 methyltransferase (315 aa).

4 residues coordinate S-adenosyl-L-methionine: Thr-163, Gly-185, Asp-207, and Asn-249.

The protein belongs to the methyltransferase superfamily. PrmA family.

It is found in the cytoplasm. It carries out the reaction L-lysyl-[protein] + 3 S-adenosyl-L-methionine = N(6),N(6),N(6)-trimethyl-L-lysyl-[protein] + 3 S-adenosyl-L-homocysteine + 3 H(+). Functionally, methylates ribosomal protein L11. This Lactobacillus helveticus (strain DPC 4571) protein is Ribosomal protein L11 methyltransferase.